The chain runs to 466 residues: Ribosomal protein uS12 methylthiotransferase RimO (466 aa).

An MTTase N-terminal domain is found at 18 to 133; that stretch reads PRIGFVSLGC…VMDAVHQHVP (116 aa). [4Fe-4S] cluster is bound by residues Cys27, Cys63, Cys92, Cys164, Cys168, and Cys171. Positions 150 to 391 constitute a Radical SAM core domain; the sequence is LTPKHYAYLK…MAVAEAVSTA (242 aa). The TRAM domain maps to 394-466; the sequence is QRRVGSSMQV…QGHDLIGELI (73 aa).

Belongs to the methylthiotransferase family. RimO subfamily. Requires [4Fe-4S] cluster as cofactor.

The protein resides in the cytoplasm. The enzyme catalyses L-aspartate(89)-[ribosomal protein uS12]-hydrogen + (sulfur carrier)-SH + AH2 + 2 S-adenosyl-L-methionine = 3-methylsulfanyl-L-aspartate(89)-[ribosomal protein uS12]-hydrogen + (sulfur carrier)-H + 5'-deoxyadenosine + L-methionine + A + S-adenosyl-L-homocysteine + 2 H(+). Catalyzes the methylthiolation of an aspartic acid residue of ribosomal protein uS12. The chain is Ribosomal protein uS12 methylthiotransferase RimO from Leptothrix cholodnii (strain ATCC 51168 / LMG 8142 / SP-6) (Leptothrix discophora (strain SP-6)).